The sequence spans 452 residues: UDP-N-acetylmuramoylalanine--D-glutamate ligase (452 aa).

ATP is bound at residue 115-121 (GTNGKTT).

This sequence belongs to the MurCDEF family.

The protein resides in the cytoplasm. The catalysed reaction is UDP-N-acetyl-alpha-D-muramoyl-L-alanine + D-glutamate + ATP = UDP-N-acetyl-alpha-D-muramoyl-L-alanyl-D-glutamate + ADP + phosphate + H(+). It participates in cell wall biogenesis; peptidoglycan biosynthesis. Functionally, cell wall formation. Catalyzes the addition of glutamate to the nucleotide precursor UDP-N-acetylmuramoyl-L-alanine (UMA). This is UDP-N-acetylmuramoylalanine--D-glutamate ligase from Citrifermentans bemidjiense (strain ATCC BAA-1014 / DSM 16622 / JCM 12645 / Bem) (Geobacter bemidjiensis).